Consider the following 434-residue polypeptide: Gamma-glutamyl phosphate reductase (434 aa).

The protein belongs to the gamma-glutamyl phosphate reductase family.

The protein resides in the cytoplasm. It catalyses the reaction L-glutamate 5-semialdehyde + phosphate + NADP(+) = L-glutamyl 5-phosphate + NADPH + H(+). Its pathway is amino-acid biosynthesis; L-proline biosynthesis; L-glutamate 5-semialdehyde from L-glutamate: step 2/2. Functionally, catalyzes the NADPH-dependent reduction of L-glutamate 5-phosphate into L-glutamate 5-semialdehyde and phosphate. The product spontaneously undergoes cyclization to form 1-pyrroline-5-carboxylate. The chain is Gamma-glutamyl phosphate reductase from Pelotomaculum thermopropionicum (strain DSM 13744 / JCM 10971 / SI).